A 165-amino-acid chain; its full sequence is Regulator of ribonuclease activity A (165 aa).

The protein belongs to the RraA family. In terms of assembly, homotrimer. Binds to both RNA-binding sites in the C-terminal region of Rne and to RhlB.

The protein localises to the cytoplasm. Globally modulates RNA abundance by binding to RNase E (Rne) and regulating its endonucleolytic activity. Can modulate Rne action in a substrate-dependent manner by altering the composition of the degradosome. Modulates RNA-binding and helicase activities of the degradosome. The polypeptide is Regulator of ribonuclease activity A (Pseudoalteromonas translucida (strain TAC 125)).